Consider the following 774-residue polypeptide: Lon protease 1 (774 aa).

One can recognise a Lon N-terminal domain in the interval 9 to 202; it reads IPLLPLRGLL…KVIDFINNEK (194 aa). Residue 354-361 participates in ATP binding; it reads GPPGVGKT. Positions 590–771 constitute a Lon proteolytic domain; that stretch reads EDQVGVVTGL…DEVLEHALVG (182 aa). Active-site residues include Ser-677 and Lys-720.

This sequence belongs to the peptidase S16 family. Homohexamer. Organized in a ring with a central cavity. Exists as a mixture of small oligomeric species in solution.

Its subcellular location is the cytoplasm. It carries out the reaction Hydrolysis of proteins in presence of ATP.. In terms of biological role, ATP-dependent serine protease that mediates the selective degradation of mutant and abnormal proteins as well as certain short-lived regulatory proteins. Required for cellular homeostasis and for survival from DNA damage and developmental changes induced by stress. Degrades polypeptides processively to yield small peptide fragments that are 5 to 10 amino acids long. Binds to DNA in a double-stranded, site-specific manner. Has been implicated in preventing sigma(G) activity under non-sporulation conditions. This chain is Lon protease 1, found in Bacillus subtilis (strain 168).